We begin with the raw amino-acid sequence, 554 residues long: Phenylalanine--tRNA ligase beta subunit (554 aa).

In terms of domain architecture, B5 spans 274-351 (LTPDSAEITI…INYGYENFNG (78 aa)). Residues Asp329, Asp335, and Asp339 each coordinate Mg(2+).

Belongs to the phenylalanyl-tRNA synthetase beta subunit family. Type 2 subfamily. As to quaternary structure, tetramer of two alpha and two beta subunits. Requires Mg(2+) as cofactor.

Its subcellular location is the cytoplasm. It catalyses the reaction tRNA(Phe) + L-phenylalanine + ATP = L-phenylalanyl-tRNA(Phe) + AMP + diphosphate + H(+). The chain is Phenylalanine--tRNA ligase beta subunit from Methanococcus aeolicus (strain ATCC BAA-1280 / DSM 17508 / OCM 812 / Nankai-3).